Here is a 238-residue protein sequence, read N- to C-terminus: tRNA (guanine-N(7)-)-methyltransferase (238 aa).

Residues E68, E93, D120, and D143 each coordinate S-adenosyl-L-methionine. D143 is a catalytic residue. Substrate is bound by residues K147, D179, and 216–219; that span reads TKFE.

This sequence belongs to the class I-like SAM-binding methyltransferase superfamily. TrmB family.

The catalysed reaction is guanosine(46) in tRNA + S-adenosyl-L-methionine = N(7)-methylguanosine(46) in tRNA + S-adenosyl-L-homocysteine. It functions in the pathway tRNA modification; N(7)-methylguanine-tRNA biosynthesis. In terms of biological role, catalyzes the formation of N(7)-methylguanine at position 46 (m7G46) in tRNA. This chain is tRNA (guanine-N(7)-)-methyltransferase, found in Ectopseudomonas mendocina (strain ymp) (Pseudomonas mendocina).